A 694-amino-acid polypeptide reads, in one-letter code: Heat shock protein homolog SSE1 (694 aa).

The disordered stretch occupies residues 671 to 694 (AQRSADSEAKKDATPEGDAQMDLD). A compositionally biased stretch (basic and acidic residues) spans 675-684 (ADSEAKKDAT).

It belongs to the heat shock protein 70 family.

It is found in the cytoplasm. The sequence is that of Heat shock protein homolog SSE1 (SSE1) from Candida glabrata (strain ATCC 2001 / BCRC 20586 / JCM 3761 / NBRC 0622 / NRRL Y-65 / CBS 138) (Yeast).